Consider the following 562-residue polypeptide: IRK-interacting protein (562 aa).

Disordered regions lie at residues 29-61 and 303-322; these read ASLMQMKSSPSSNYSLRNPSSSSAASPASRPLP and VVSQENSGGRSSGKKNSEMP. Low complexity predominate over residues 36–61; it reads SSPSSNYSLRNPSSSSAASPASRPLP. A coiled-coil region spans residues 246 to 306; it reads SGVEKLKREL…LREATEVVSQ (61 aa).

As to quaternary structure, interacts with IRK. Highly expressed in root tips, shoot apices and developing flowers.

The sequence is that of IRK-interacting protein from Arabidopsis thaliana (Mouse-ear cress).